Reading from the N-terminus, the 573-residue chain is Dihydroxy-acid dehydratase (573 aa).

Cys62 is a [2Fe-2S] cluster binding site. Residue Asp94 participates in Mg(2+) binding. Cys135 contributes to the [2Fe-2S] cluster binding site. Residues Asp136 and Lys137 each coordinate Mg(2+). Lys137 is subject to N6-carboxylysine. Cys212 contributes to the [2Fe-2S] cluster binding site. Glu463 contributes to the Mg(2+) binding site. The active-site Proton acceptor is the Ser489.

Belongs to the IlvD/Edd family. In terms of assembly, homodimer. It depends on [2Fe-2S] cluster as a cofactor. The cofactor is Mg(2+).

It catalyses the reaction (2R)-2,3-dihydroxy-3-methylbutanoate = 3-methyl-2-oxobutanoate + H2O. It carries out the reaction (2R,3R)-2,3-dihydroxy-3-methylpentanoate = (S)-3-methyl-2-oxopentanoate + H2O. It functions in the pathway amino-acid biosynthesis; L-isoleucine biosynthesis; L-isoleucine from 2-oxobutanoate: step 3/4. Its pathway is amino-acid biosynthesis; L-valine biosynthesis; L-valine from pyruvate: step 3/4. Functions in the biosynthesis of branched-chain amino acids. Catalyzes the dehydration of (2R,3R)-2,3-dihydroxy-3-methylpentanoate (2,3-dihydroxy-3-methylvalerate) into 2-oxo-3-methylpentanoate (2-oxo-3-methylvalerate) and of (2R)-2,3-dihydroxy-3-methylbutanoate (2,3-dihydroxyisovalerate) into 2-oxo-3-methylbutanoate (2-oxoisovalerate), the penultimate precursor to L-isoleucine and L-valine, respectively. This chain is Dihydroxy-acid dehydratase, found in Renibacterium salmoninarum (strain ATCC 33209 / DSM 20767 / JCM 11484 / NBRC 15589 / NCIMB 2235).